The sequence spans 189 residues: MAQLYYKYGTMNSGKTIEILKVAHNYEEQGKPVVIMTSALDTRDGFGIVSSRIGMRREAIPISNDMDIFTFIAQLEEKPYCVLIDESQFLSKQNVYDLARVVDELNVPVMAFGLKNDFQNNLFEGSKHLLLLADKIDEIKTICQYCSKKATMVLRIENGKPVYEGDQIQIGGNETYIPVCRKHYFNPEI.

Residues 9 to 16 and 85 to 88 each bind ATP; these read GTMNSGKT and DESQ. The Proton acceptor role is filled by Glu86. Zn(2+) is bound by residues Cys143, Cys146, Cys180, and His183.

This sequence belongs to the thymidine kinase family. Homotetramer.

The protein resides in the cytoplasm. The enzyme catalyses thymidine + ATP = dTMP + ADP + H(+). The sequence is that of Thymidine kinase from Streptococcus pyogenes serotype M3 (strain ATCC BAA-595 / MGAS315).